We begin with the raw amino-acid sequence, 245 residues long: MNAFTLYPAIDMRNGKCVRLIQGDYGKETIYGDSPLDMAAQFAQEGAEWIHLVDLDGAKAGRKVNDRHVLDIARQLDAKVEIGGGIRSEADVYGYLSQGVDRVILGSSAVSDPAFVKSMLKQYGGKIAIGLDARNGYVSTEGWLETSSVRAADLGRELAAEGAETFIFTDIATDGMLSGPNIESTVQLAKATGKTVIASGGVSSVADLKALARFKDAGVSGAIIGKALYTKQFTLAEALSGVKDA.

Aspartate 11 acts as the Proton acceptor in catalysis. The Proton donor role is filled by aspartate 132.

This sequence belongs to the HisA/HisF family.

It localises to the cytoplasm. It catalyses the reaction 1-(5-phospho-beta-D-ribosyl)-5-[(5-phospho-beta-D-ribosylamino)methylideneamino]imidazole-4-carboxamide = 5-[(5-phospho-1-deoxy-D-ribulos-1-ylimino)methylamino]-1-(5-phospho-beta-D-ribosyl)imidazole-4-carboxamide. Its pathway is amino-acid biosynthesis; L-histidine biosynthesis; L-histidine from 5-phospho-alpha-D-ribose 1-diphosphate: step 4/9. This is 1-(5-phosphoribosyl)-5-[(5-phosphoribosylamino)methylideneamino] imidazole-4-carboxamide isomerase from Bacillus velezensis (strain DSM 23117 / BGSC 10A6 / LMG 26770 / FZB42) (Bacillus amyloliquefaciens subsp. plantarum).